A 306-amino-acid polypeptide reads, in one-letter code: Pantothenate kinase (306 aa).

91-98 lines the ATP pocket; sequence GSVAVGKS.

The protein belongs to the prokaryotic pantothenate kinase family.

The protein resides in the cytoplasm. The enzyme catalyses (R)-pantothenate + ATP = (R)-4'-phosphopantothenate + ADP + H(+). It functions in the pathway cofactor biosynthesis; coenzyme A biosynthesis; CoA from (R)-pantothenate: step 1/5. The chain is Pantothenate kinase (coaA) from Streptococcus pneumoniae serotype 4 (strain ATCC BAA-334 / TIGR4).